The primary structure comprises 156 residues: Phosphopantetheine adenylyltransferase (156 aa).

Residue Thr9 coordinates substrate. ATP contacts are provided by residues 9-10 (TF) and His17. Residues Lys41, Leu73, and Arg87 each contribute to the substrate site. Residues 88–90 (GVR), Glu98, and 123–129 (WAFVSST) each bind ATP.

This sequence belongs to the bacterial CoaD family. Homohexamer. Requires Mg(2+) as cofactor.

The protein resides in the cytoplasm. It carries out the reaction (R)-4'-phosphopantetheine + ATP + H(+) = 3'-dephospho-CoA + diphosphate. Its pathway is cofactor biosynthesis; coenzyme A biosynthesis; CoA from (R)-pantothenate: step 4/5. Reversibly transfers an adenylyl group from ATP to 4'-phosphopantetheine, yielding dephospho-CoA (dPCoA) and pyrophosphate. In Haemophilus influenzae (strain 86-028NP), this protein is Phosphopantetheine adenylyltransferase.